The primary structure comprises 419 residues: UDP-N-acetylglucosamine 1-carboxyvinyltransferase (419 aa).

22–23 (KN) contributes to the phosphoenolpyruvate binding site. Residue R93 participates in UDP-N-acetyl-alpha-D-glucosamine binding. Catalysis depends on C117, which acts as the Proton donor. Residue C117 is modified to 2-(S-cysteinyl)pyruvic acid O-phosphothioketal. Residues 122-126 (RPVDQ), D305, and I327 contribute to the UDP-N-acetyl-alpha-D-glucosamine site.

The protein belongs to the EPSP synthase family. MurA subfamily.

It localises to the cytoplasm. It carries out the reaction phosphoenolpyruvate + UDP-N-acetyl-alpha-D-glucosamine = UDP-N-acetyl-3-O-(1-carboxyvinyl)-alpha-D-glucosamine + phosphate. The protein operates within cell wall biogenesis; peptidoglycan biosynthesis. Cell wall formation. Adds enolpyruvyl to UDP-N-acetylglucosamine. This is UDP-N-acetylglucosamine 1-carboxyvinyltransferase from Dichelobacter nodosus (strain VCS1703A).